Consider the following 312-residue polypeptide: MEKNAGTDDALALSEATARDYLVLLKPRVMSLVVFTGLVGLVVAPGHMNPVLAAISILCVAVGAGASGALNMWYDADIDAVMKRTRNRPIPAGIIAPNQVLAFGLTLSAFSVVTLGLMVNWLSAALLAFTIFFYAVVYTMWLKRSTPQNIVIGGAAGAFPPMIGWAAATGEITWDSVVLFMIIFLWTPPHFWALSLFSANDYEAARIPMMPNVKGELSTRRQALFYSIIMAPVGVLPWVLGFAGPVYGAISTLLGLAFVYYAWRMWVAGSQPEMLAAARKLFRFSLLYLSGLFAVLLVEALVMKALIAFGGF.

9 helical membrane-spanning segments follow: residues 29–49 (VMSL…GHMN), 50–70 (PVLA…SGAL), 90–110 (IPAG…LSAF), 117–137 (LMVN…YAVV), 150–170 (IVIG…AATG), 177–197 (VVLF…LSLF), 223–243 (ALFY…LGFA), 248–268 (GAIS…MWVA), and 292–312 (LFAV…FGGF).

The protein belongs to the UbiA prenyltransferase family. Protoheme IX farnesyltransferase subfamily.

The protein resides in the cell inner membrane. It carries out the reaction heme b + (2E,6E)-farnesyl diphosphate + H2O = Fe(II)-heme o + diphosphate. It participates in porphyrin-containing compound metabolism; heme O biosynthesis; heme O from protoheme: step 1/1. In terms of biological role, converts heme B (protoheme IX) to heme O by substitution of the vinyl group on carbon 2 of heme B porphyrin ring with a hydroxyethyl farnesyl side group. The protein is Protoheme IX farnesyltransferase of Brucella anthropi (strain ATCC 49188 / DSM 6882 / CCUG 24695 / JCM 21032 / LMG 3331 / NBRC 15819 / NCTC 12168 / Alc 37) (Ochrobactrum anthropi).